A 1297-amino-acid chain; its full sequence is MRILRGSPALSEFRVNKLLELCREQDLPVTGIYAEFMHFADLTSELDAEALEKLEKLLTYGPTIEEHEPQGLLLLVTPRPGTISPWSSKATDIAQNCGLNAVKRLERGTAYYVESSSELSSVQIDIVKSIIHDRMMEAVFGDLEAAAALFSVAQPAPMTQVDILSGGRLALEEANVSLGLALAEDEIDYLVENFTKLGRNPNDIELMMFAQANSEHCRHKIFNADWTIDGVEQPKSLFKMIKNTFETTPDHVLSAYKDNAAVMTGSKVGRFFPDPETRQYNYHHEDAHILMKVETHNHPTAISPWPGASTGSGGEIRDEGATGIGGKPKAGLVGFTTSNLRIPGFEQPWETDFGKPGRIVNALDIMLEGPLGGAAFNNEFGRPNLLGYFRTYEEKVTSHAGEEVRGYHKPIMIAGGMGNIRDEHVQKKEIPVGASLIVLGGPAMNIGLGGGAASSMASGQSAEDLDFASVQRENPEMERRCQEVIDRCWQLGDNNPIAFIHDVGAGGISNALPELVNDGERGGKFQLRDVPNDEPGMSPLEIWCNESQERYVLAVAPENMAAFDAICKRERAPYAVVGVATEERHLTLEDAHFDNTPIDMPMDILLGKPPKMHREATTLKVDSPAMTRDGIELNEAVDRVLRLPTVAEKTFLITIGDRTVTGLVARDQMVGPWQVPVANCAVTAASYDTYHGEAMSMGERTPVALLDFGASARLAVGESLTNIAATDIGDIKRIKLSANWMSPAGHPGEDAGLYEAVKAVGEELCPALGLTIPVGKDSMSMKTKWNENGEEKEVTSPLSLIITAFARVEDVRKTITPQLRTDKGETSLVLVDLGNGKNRLGATALAQVYKQLGDKPADVDNAEQLKGFFDAMQALVRQDKLLAYHDKGDGGLLVTLAEMAFAGHCGVNANIAALGDDVLAALFNEELGAVVQVKNDELDSVLSTLAANGLEACSHVIGAIDASDNFVIRSGDAVILERSRTDLRVIWAETTHKMQALRDNPACADQEFEAKKDNSDPGLNVSLSFDVNEDIAAPYIAKGAKPKMAILREQGVNSHVEMAAAFDRAGFEATDIHMSDILTGQAVLDEYHGLVACGGFSYGDVLGAGEGWAKSVLFNAQAREQFQAFFNRENTFSLGVCNGCQMLSNLKELIPGADLWPRFVRNESERFEARFSLVEVQKSDSVFFDGMAGSRMPIAVSHGEGRVEVRDAQHLAAIEASGTVAVRFVDNLGNPTQQYPNNPNGSPNAITGLTTKDGRVTIMMPHPERVFRTVANSWAPEGWGENGAWMRMFQNARKNLG.

Residues 307 to 318 and alanine 678 contribute to the ATP site; that span reads GASTGSGGEIRD. Residues glutamate 718, asparagine 722, and aspartate 886 each coordinate Mg(2+). Residues 1044 to 1297 enclose the Glutamine amidotransferase type-1 domain; it reads MAILREQGVN…MFQNARKNLG (254 aa). Residue cysteine 1137 is the Nucleophile of the active site. Residues histidine 1262 and glutamate 1264 contribute to the active site.

The protein in the N-terminal section; belongs to the FGAMS family. Monomer.

It is found in the cytoplasm. The enzyme catalyses N(2)-formyl-N(1)-(5-phospho-beta-D-ribosyl)glycinamide + L-glutamine + ATP + H2O = 2-formamido-N(1)-(5-O-phospho-beta-D-ribosyl)acetamidine + L-glutamate + ADP + phosphate + H(+). The protein operates within purine metabolism; IMP biosynthesis via de novo pathway; 5-amino-1-(5-phospho-D-ribosyl)imidazole from N(2)-formyl-N(1)-(5-phospho-D-ribosyl)glycinamide: step 1/2. Phosphoribosylformylglycinamidine synthase involved in the purines biosynthetic pathway. Catalyzes the ATP-dependent conversion of formylglycinamide ribonucleotide (FGAR) and glutamine to yield formylglycinamidine ribonucleotide (FGAM) and glutamate. The protein is Phosphoribosylformylglycinamidine synthase of Vibrio vulnificus (strain CMCP6).